The sequence spans 215 residues: Probable transaldolase (215 aa).

Lysine 83 (schiff-base intermediate with substrate) is an active-site residue.

This sequence belongs to the transaldolase family. Type 3B subfamily.

It is found in the cytoplasm. The enzyme catalyses D-sedoheptulose 7-phosphate + D-glyceraldehyde 3-phosphate = D-erythrose 4-phosphate + beta-D-fructose 6-phosphate. The protein operates within carbohydrate degradation; pentose phosphate pathway; D-glyceraldehyde 3-phosphate and beta-D-fructose 6-phosphate from D-ribose 5-phosphate and D-xylulose 5-phosphate (non-oxidative stage): step 2/3. Transaldolase is important for the balance of metabolites in the pentose-phosphate pathway. In Pelotomaculum thermopropionicum (strain DSM 13744 / JCM 10971 / SI), this protein is Probable transaldolase.